Reading from the N-terminus, the 718-residue chain is Polyribonucleotide nucleotidyltransferase (718 aa).

Mg(2+) contacts are provided by Asp-496 and Asp-502. The 60-residue stretch at 563–622 folds into the KH domain; the sequence is PRLLTIKIDPDMIGLVIGPGGKTIKGITEETGAKIDIEDDGTVTISAVDENKAKRARNIV. In terms of domain architecture, S1 motif spans 632–700; that stretch reads GDVYAGRVTR…NKGRINLTRL (69 aa).

As to quaternary structure, may form homodimers or higher order multimers. Interacts with RNase E (rne). Mg(2+) serves as cofactor.

It is found in the cytoplasm. The catalysed reaction is RNA(n+1) + phosphate = RNA(n) + a ribonucleoside 5'-diphosphate. Its function is as follows. Involved in mRNA degradation. Catalyzes the phosphorolysis of single-stranded polyribonucleotides processively in the 3'- to 5'-direction. This is Polyribonucleotide nucleotidyltransferase from Nostoc sp. (strain PCC 7120 / SAG 25.82 / UTEX 2576).